Consider the following 173-residue polypeptide: Crossover junction endodeoxyribonuclease RuvC (173 aa).

Active-site residues include aspartate 8, glutamate 67, and aspartate 139. Aspartate 8, glutamate 67, and aspartate 139 together coordinate Mg(2+).

The protein belongs to the RuvC family. Homodimer which binds Holliday junction (HJ) DNA. The HJ becomes 2-fold symmetrical on binding to RuvC with unstacked arms; it has a different conformation from HJ DNA in complex with RuvA. In the full resolvosome a probable DNA-RuvA(4)-RuvB(12)-RuvC(2) complex forms which resolves the HJ. Mg(2+) serves as cofactor.

It is found in the cytoplasm. It catalyses the reaction Endonucleolytic cleavage at a junction such as a reciprocal single-stranded crossover between two homologous DNA duplexes (Holliday junction).. Functionally, the RuvA-RuvB-RuvC complex processes Holliday junction (HJ) DNA during genetic recombination and DNA repair. Endonuclease that resolves HJ intermediates. Cleaves cruciform DNA by making single-stranded nicks across the HJ at symmetrical positions within the homologous arms, yielding a 5'-phosphate and a 3'-hydroxyl group; requires a central core of homology in the junction. The consensus cleavage sequence is 5'-(A/T)TT(C/G)-3'. Cleavage occurs on the 3'-side of the TT dinucleotide at the point of strand exchange. HJ branch migration catalyzed by RuvA-RuvB allows RuvC to scan DNA until it finds its consensus sequence, where it cleaves and resolves the cruciform DNA. This chain is Crossover junction endodeoxyribonuclease RuvC, found in Shewanella piezotolerans (strain WP3 / JCM 13877).